The chain runs to 247 residues: Probable transcriptional regulatory protein GM21_0933 (247 aa).

The protein belongs to the TACO1 family.

The protein resides in the cytoplasm. In Geobacter sp. (strain M21), this protein is Probable transcriptional regulatory protein GM21_0933.